A 229-amino-acid polypeptide reads, in one-letter code: Flagellar brake protein YcgR (229 aa).

The region spanning 134–218 (QLSLRVLDVS…GERALQRYID (85 aa)) is the PilZ domain.

It belongs to the YcgR family. In terms of assembly, monomer. Interacts with the flagellar basal bodies.

The protein localises to the bacterial flagellum basal body. Its function is as follows. Acts as a flagellar brake, regulating swimming and swarming in a bis-(3'-5') cyclic diguanylic acid (c-di-GMP)-dependent manner. Binds 1 c-di-GMP dimer per subunit. Increasing levels of c-di-GMP lead to decreased motility. The sequence is that of Flagellar brake protein YcgR from Methylibium petroleiphilum (strain ATCC BAA-1232 / LMG 22953 / PM1).